We begin with the raw amino-acid sequence, 734 residues long: Photosystem I P700 chlorophyll a apoprotein A2 (734 aa).

8 helical membrane-spanning segments follow: residues I46–A69, L135–Q158, L175–I199, I273–Y291, L330–Y353, A369–I395, A417–H439, and F517–V535. [4Fe-4S] cluster contacts are provided by C559 and C568. 2 consecutive transmembrane segments (helical) span residues A575–W596 and L643–I665. H654, M662, and Y670 together coordinate chlorophyll a. Residue W671 coordinates phylloquinone. Residues L707 to A727 traverse the membrane as a helical segment.

Belongs to the PsaA/PsaB family. As to quaternary structure, the PsaA/B heterodimer binds the P700 chlorophyll special pair and subsequent electron acceptors. PSI consists of a core antenna complex that captures photons, and an electron transfer chain that converts photonic excitation into a charge separation. The eukaryotic PSI reaction center is composed of at least 11 subunits. Requires P700 is a chlorophyll a/chlorophyll a' dimer, A0 is one or more chlorophyll a, A1 is one or both phylloquinones and FX is a shared 4Fe-4S iron-sulfur center. as cofactor.

It is found in the plastid. Its subcellular location is the chloroplast thylakoid membrane. The enzyme catalyses reduced [plastocyanin] + hnu + oxidized [2Fe-2S]-[ferredoxin] = oxidized [plastocyanin] + reduced [2Fe-2S]-[ferredoxin]. In terms of biological role, psaA and PsaB bind P700, the primary electron donor of photosystem I (PSI), as well as the electron acceptors A0, A1 and FX. PSI is a plastocyanin-ferredoxin oxidoreductase, converting photonic excitation into a charge separation, which transfers an electron from the donor P700 chlorophyll pair to the spectroscopically characterized acceptors A0, A1, FX, FA and FB in turn. Oxidized P700 is reduced on the lumenal side of the thylakoid membrane by plastocyanin. The protein is Photosystem I P700 chlorophyll a apoprotein A2 of Staurastrum punctulatum (Green alga).